The primary structure comprises 121 residues: Large ribosomal subunit protein bL20 (121 aa).

It belongs to the bacterial ribosomal protein bL20 family.

In terms of biological role, binds directly to 23S ribosomal RNA and is necessary for the in vitro assembly process of the 50S ribosomal subunit. It is not involved in the protein synthesizing functions of that subunit. In Persephonella marina (strain DSM 14350 / EX-H1), this protein is Large ribosomal subunit protein bL20.